The primary structure comprises 1486 residues: Chromosome partition protein MukB (1486 aa).

34 to 41 (GGNGAGKS) lines the ATP pocket. Coiled-coil stretches lie at residues 326–418 (LEAD…QYNQ), 444–480 (LETF…QAYQ), and 509–603 (RHLA…RAPV). Residues 666-783 (PGGSEDQRLN…EVPLFGRAAR (118 aa)) are flexible hinge. Coiled-coil stretches lie at residues 835–923 (EAEI…AKLE), 977–1115 (EMLS…TAKA), and 1209–1266 (VEAI…QNVS).

It belongs to the SMC family. MukB subfamily. Homodimerization via its hinge domain. Binds to DNA via its C-terminal region. Interacts, and probably forms a ternary complex, with MukE and MukF via its C-terminal region. The complex formation is stimulated by calcium or magnesium. Interacts with tubulin-related protein FtsZ.

It is found in the cytoplasm. It localises to the nucleoid. Functionally, plays a central role in chromosome condensation, segregation and cell cycle progression. Functions as a homodimer, which is essential for chromosome partition. Involved in negative DNA supercoiling in vivo, and by this means organize and compact chromosomes. May achieve or facilitate chromosome segregation by condensation DNA from both sides of a centrally located replisome during cell division. This chain is Chromosome partition protein MukB, found in Escherichia coli O9:H4 (strain HS).